A 563-amino-acid polypeptide reads, in one-letter code: Chitinase A (563 aa).

The N-terminal stretch at M1–A23 is a signal peptide. In terms of domain architecture, GH18 spans K158 to S559. E315 functions as the Proton donor in the catalytic mechanism.

This sequence belongs to the glycosyl hydrolase 18 family. Chitinase class II subfamily.

The enzyme catalyses Random endo-hydrolysis of N-acetyl-beta-D-glucosaminide (1-&gt;4)-beta-linkages in chitin and chitodextrins.. The sequence is that of Chitinase A (chiA) from Serratia marcescens.